The primary structure comprises 147 residues: uncharacterized protein (147 aa).

Residues 1 to 37 are disordered; sequence MVALFKSSLGRPEQHQTPQIRISPASSNVEHSEKQPR. Residues 15–29 show a composition bias toward polar residues; that stretch reads HQTPQIRISPASSNV. Residues 71–147 form the Cytochrome b5 heme-binding domain; the sequence is PIPVTKEELA…LKTSFVGFLV (77 aa). Residues His106 and His129 each coordinate heme.

It belongs to the cytochrome b5 family.

This is an uncharacterized protein from Schizosaccharomyces pombe (strain 972 / ATCC 24843) (Fission yeast).